A 60-amino-acid polypeptide reads, in one-letter code: Large ribosomal subunit protein uL30 (60 aa).

It belongs to the universal ribosomal protein uL30 family. Part of the 50S ribosomal subunit.

This is Large ribosomal subunit protein uL30 from Polaromonas sp. (strain JS666 / ATCC BAA-500).